A 207-amino-acid polypeptide reads, in one-letter code: LexA repressor (207 aa).

A DNA-binding region (H-T-H motif) is located at residues 28–48; the sequence is RAEISRELGFKSANAAEEHLK. Active-site for autocatalytic cleavage activity residues include S123 and K160.

The protein belongs to the peptidase S24 family. Homodimer.

The enzyme catalyses Hydrolysis of Ala-|-Gly bond in repressor LexA.. In terms of biological role, represses a number of genes involved in the response to DNA damage (SOS response), including recA and lexA. In the presence of single-stranded DNA, RecA interacts with LexA causing an autocatalytic cleavage which disrupts the DNA-binding part of LexA, leading to derepression of the SOS regulon and eventually DNA repair. This chain is LexA repressor, found in Haemophilus influenzae (strain 86-028NP).